The chain runs to 79 residues: Envelope small membrane protein (79 aa).

Topologically, residues 1–16 (MYDIVGTNNSILIANV) are virion surface. The helical transmembrane segment at 17–37 (LVLIIICLLVVIVGCALLLIL) threads the bilayer. Topologically, residues 38 to 75 (QFVFGVCGFVFKFVCKPTILVYNKFRNESLLNEREELL) are intravirion.

This sequence belongs to the betacoronaviruses E protein family. Homopentamer. Interacts with membrane protein M in the budding compartment of the host cell, which is located between endoplasmic reticulum and the Golgi complex. Interacts with Nucleoprotein.

It localises to the host Golgi apparatus membrane. In terms of biological role, plays a central role in virus morphogenesis and assembly. Acts as a viroporin and self-assembles in host membranes forming pentameric protein-lipid pores that allow ion transport. Also plays a role in the induction of apoptosis. This Rousettus leschenaultii (Leschenault's rousette) protein is Envelope small membrane protein.